Here is a 389-residue protein sequence, read N- to C-terminus: MSMLGERRRGLTDPEMAAVILKALPEAPLDGNNKMGYFVTPRWKRLTEYEALTVYAQPNADWIAGGLDWGDWTQKFHGGRPSWGNETTELRTVDWFKHRDPLRRWHAPYVKDKAEEWRYTDRFLQGYSADGQIRAMNPTWRDEFINRYWGAFLFNEYGLFNAHSQGAREALSDVTRVSLAFWGFDKIDIAQMIQLERGFLAKIVPGFDESTAVPKAEWTNGEVYKSARLAVEGLWQEVFDWNESAFSVHAVYDALFGQFVRREFFQRLAPRFGDNLTPFFINQAQTYFQIAKQGVQDLYYNCLGDDPEFSDYNRTVMRNWTGKWLEPTIAALRDFMGLFAKLPAGTTDKEEITASLYRVVDDWIEDYASRIDFKADRDQIVKAVLAGLK.

In terms of assembly, m.capsulatus has two forms of methane monooxygenase, a soluble and a membrane-bound type. The soluble type consists of four components (A to D): protein A, comprising three chains, in an alpha-2, beta-2, gamma-2 configuration, is a nonheme iron protein containing an unusual mu-hydroxo bridge structure at its active site and interacts with both oxygen and methane.

The enzyme catalyses methane + NADH + O2 + H(+) = methanol + NAD(+) + H2O. It carries out the reaction methane + NADPH + O2 + H(+) = methanol + NADP(+) + H2O. Functionally, responsible for the initial oxygenation of methane to methanol in methanotrophs. It also catalyzes the monohydroxylation of a variety of unactivated alkenes, alicyclic, aromatic and heterocyclic compounds. This chain is Methane monooxygenase component A beta chain (mmoY), found in Methylococcus capsulatus (strain ATCC 33009 / NCIMB 11132 / Bath).